The chain runs to 435 residues: Adenylosuccinate synthetase (435 aa).

GTP contacts are provided by residues 22 to 28 and 50 to 52; these read GDEGKGK and GHT. The active-site Proton acceptor is Asp23. 2 residues coordinate Mg(2+): Asp23 and Gly50. Residues 23–26, 48–51, Thr140, Arg154, Gln235, Thr250, and Arg314 each bind IMP; these read DEGK and NAGH. Residue His51 is the Proton donor of the active site. 310–316 contacts substrate; the sequence is ATTGRKR. GTP is bound by residues Arg316, 342 to 344, and 424 to 426; these read KLD and SVG.

It belongs to the adenylosuccinate synthetase family. In terms of assembly, homodimer. It depends on Mg(2+) as a cofactor.

Its subcellular location is the cytoplasm. It catalyses the reaction IMP + L-aspartate + GTP = N(6)-(1,2-dicarboxyethyl)-AMP + GDP + phosphate + 2 H(+). The protein operates within purine metabolism; AMP biosynthesis via de novo pathway; AMP from IMP: step 1/2. Functionally, plays an important role in the de novo pathway of purine nucleotide biosynthesis. Catalyzes the first committed step in the biosynthesis of AMP from IMP. This chain is Adenylosuccinate synthetase, found in Chlorobaculum tepidum (strain ATCC 49652 / DSM 12025 / NBRC 103806 / TLS) (Chlorobium tepidum).